The following is a 120-amino-acid chain: Large ribosomal subunit protein bL20c (120 aa).

This sequence belongs to the bacterial ribosomal protein bL20 family.

Its subcellular location is the plastid. Functionally, binds directly to 23S ribosomal RNA and is necessary for the in vitro assembly process of the 50S ribosomal subunit. It is not involved in the protein synthesizing functions of that subunit. The protein is Large ribosomal subunit protein bL20c (rpl20) of Cuscuta gronovii (Common dodder).